The chain runs to 468 residues: UDP-N-acetylmuramoylalanine--D-glutamate ligase (468 aa).

127–133 (GTNGKTT) serves as a coordination point for ATP.

Belongs to the MurCDEF family.

The protein localises to the cytoplasm. The catalysed reaction is UDP-N-acetyl-alpha-D-muramoyl-L-alanine + D-glutamate + ATP = UDP-N-acetyl-alpha-D-muramoyl-L-alanyl-D-glutamate + ADP + phosphate + H(+). Its pathway is cell wall biogenesis; peptidoglycan biosynthesis. In terms of biological role, cell wall formation. Catalyzes the addition of glutamate to the nucleotide precursor UDP-N-acetylmuramoyl-L-alanine (UMA). The sequence is that of UDP-N-acetylmuramoylalanine--D-glutamate ligase from Prochlorococcus marinus (strain MIT 9312).